The chain runs to 276 residues: Adenylyl-sulfate kinase 1, chloroplastic (276 aa).

Residues 1-38 (MIAAGAKSLLGLSMASPKGIFDSNSMSNSRSVVVVRAC) constitute a chloroplast transit peptide. Positions 46-74 (TLSHNKNGSIPEVKSINGHTGQKQGPLST) are disordered. Residues 62–74 (NGHTGQKQGPLST) show a composition bias toward polar residues. ATP is bound at residue 108–116 (GLSGSGKST). Residues aspartate 138, arginine 141, arginine 155, asparagine 158, 181–182 (IS), and glycine 231 contribute to the substrate site. The active-site Phosphoserine intermediate is serine 182.

This sequence belongs to the APS kinase family. In terms of assembly, homodimer; disulfide-linked. Interacts with APK2. Expressed in root vasculature, root tips, leaf epidermal and guard cells, pollen grains and funiculus of developing seeds.

The protein resides in the plastid. The protein localises to the chloroplast. The enzyme catalyses adenosine 5'-phosphosulfate + ATP = 3'-phosphoadenylyl sulfate + ADP + H(+). The protein operates within sulfur metabolism; hydrogen sulfide biosynthesis; sulfite from sulfate: step 2/3. In terms of biological role, catalyzes the synthesis of activated sulfate. Essential for plant reproduction and viability. Required for the production of glucosinolates. This is Adenylyl-sulfate kinase 1, chloroplastic (APK1) from Arabidopsis thaliana (Mouse-ear cress).